The chain runs to 1080 residues: Headcase protein (1080 aa).

Disordered regions lie at residues 1 to 27, 181 to 277, 310 to 335, 655 to 693, 798 to 826, 891 to 916, and 940 to 974; these read MAPRRNSNISSSGNSTQQQHQQQLQQQ, IYLN…GNNG, SLSSSGAGSGSTSPSDSQSSGEISVS, PLESPVGTGATTTQVPNAQGSPTASGCSSNTIASKQPPK, SKYQQQQHQQQQQQRQQQHNLQPQQQHAT, SGCSSGSGSQPSLSPTASSNGNDGSK, and QRQQPPQQQVPQQQPHAASPTASLTSSSSSSNGWS. Positions 181-197 are enriched in polar residues; it reads IYLNGSGNRPTLANGSL. Residues 218–228 are compositionally biased toward gly residues; sequence NGGGGGGGAGV. The segment covering 232–251 has biased composition (polar residues); that stretch reads TKTPLSNNNGNSYAGLTPNP. Positions 263 to 277 are enriched in low complexity; that stretch reads NNGNTASNGSSGNNG. Polar residues predominate over residues 663–688; sequence GATTTQVPNAQGSPTASGCSSNTIAS. Residues 801 to 826 show a composition bias toward low complexity; it reads QQQQHQQQQQQRQQQHNLQPQQQHAT. Positions 900-913 are enriched in polar residues; it reads QPSLSPTASSNGND. Positions 941–974 are enriched in low complexity; that stretch reads RQQPPQQQVPQQQPHAASPTASLTSSSSSSNGWS.

In terms of tissue distribution, expressed in all imaginal cells of the embryo and larvae. Expressed in a subset of tracheal fusion cells from stage 14 to the end of embryogenesis in metameres 2-9, lateral trunk and ventral anastomoses.

It localises to the cytoplasm. Required for imaginal cell differentiation, may be involved in hormonal responsiveness during metamorphosis. Involved in an inhibitory signaling mechanism to determine the number of cells that will form unicellular sprouts in the trachea. Regulated by transcription factor esg. The longer hdc protein is completely functional and the shorter protein carries some function. In Drosophila melanogaster (Fruit fly), this protein is Headcase protein.